The chain runs to 131 residues: MNLPTAQEVQGLMARYIELVDVGDIEAIVQMYADDATVEDPFGQPPIHGREQIAAFYRQGLGGGKVRACLTGPVRASHNGCGAMPFRVEMVWNGQPCALDVIDVMRFDEHGRIQTMQAYWSEVNLSVREPQ.

Tyrosine 16 (proton donor) is an active-site residue. The active-site Proton acceptor is aspartate 40. A substrate-binding site is contributed by aspartate 103.

In terms of assembly, homodimer.

It carries out the reaction a 3-oxo-Delta(5)-steroid = a 3-oxo-Delta(4)-steroid. The polypeptide is Steroid Delta-isomerase (ksi) (Pseudomonas putida (Arthrobacter siderocapsulatus)).